The following is a 226-amino-acid chain: uncharacterized protein (226 aa).

This is an uncharacterized protein from Mycobacterium bovis (strain ATCC BAA-935 / AF2122/97).